A 219-amino-acid polypeptide reads, in one-letter code: Chloramphenicol acetyltransferase (219 aa).

Histidine 190 functions as the Proton acceptor in the catalytic mechanism.

It belongs to the chloramphenicol acetyltransferase family. Homotrimer.

The enzyme catalyses chloramphenicol + acetyl-CoA = chloramphenicol 3-acetate + CoA. In terms of biological role, this enzyme is an effector of chloramphenicol resistance in bacteria. The protein is Chloramphenicol acetyltransferase (catQ) of Clostridium perfringens.